The chain runs to 147 residues: MAPSGPTPYSHRPQIKHYGTFSDCMRYTLNDESKVDDRCSDIHNSLAQSNVTSSMSVMNDSEECPLINGPSMQAEDPKSVFYKVRKPDRSRDFSWQNLNSHGNSGLRREKYIRSSKRRWKNPEIFKVSLKCESIGAGNGIKISFSFF.

The interval 51–72 (VTSSMSVMNDSEECPLINGPSM) is disordered.

This is an uncharacterized protein from Gallid herpesvirus 2 (strain GA) (GaHV-2).